The following is a 376-amino-acid chain: 23S rRNA (uracil(747)-C(5))-methyltransferase RlmC (376 aa).

[4Fe-4S] cluster-binding residues include Cys3, Cys11, Cys14, and Cys87. S-adenosyl-L-methionine is bound by residues Gln212, Phe241, Glu262, and Asn307. The Nucleophile role is filled by Cys334.

The protein belongs to the class I-like SAM-binding methyltransferase superfamily. RNA M5U methyltransferase family. RlmC subfamily.

The catalysed reaction is uridine(747) in 23S rRNA + S-adenosyl-L-methionine = 5-methyluridine(747) in 23S rRNA + S-adenosyl-L-homocysteine + H(+). Functionally, catalyzes the formation of 5-methyl-uridine at position 747 (m5U747) in 23S rRNA. This chain is 23S rRNA (uracil(747)-C(5))-methyltransferase RlmC, found in Salmonella newport (strain SL254).